The primary structure comprises 82 residues: Putative defensin-like protein 48 (82 aa).

An N-terminal signal peptide occupies residues methionine 1 to glycine 28. 4 cysteine pairs are disulfide-bonded: cysteine 39-cysteine 80, cysteine 43-cysteine 67, cysteine 53-cysteine 78, and cysteine 57-cysteine 79.

The protein belongs to the DEFL family.

It is found in the secreted. The sequence is that of Putative defensin-like protein 48 from Arabidopsis thaliana (Mouse-ear cress).